A 442-amino-acid polypeptide reads, in one-letter code: 3-phosphoshikimate 1-carboxyvinyltransferase (442 aa).

Positions 25, 26, and 30 each coordinate 3-phosphoshikimate. Lys-25 contacts phosphoenolpyruvate. Phosphoenolpyruvate contacts are provided by Gly-96 and Arg-124. 3-phosphoshikimate is bound by residues Ser-171, Ser-172, Gln-173, Ser-203, Asp-325, and Lys-352. Gln-173 contacts phosphoenolpyruvate. Asp-325 serves as the catalytic Proton acceptor. The phosphoenolpyruvate site is built by Arg-356, Arg-400, and Lys-425.

This sequence belongs to the EPSP synthase family. Monomer.

It is found in the cytoplasm. The catalysed reaction is 3-phosphoshikimate + phosphoenolpyruvate = 5-O-(1-carboxyvinyl)-3-phosphoshikimate + phosphate. It functions in the pathway metabolic intermediate biosynthesis; chorismate biosynthesis; chorismate from D-erythrose 4-phosphate and phosphoenolpyruvate: step 6/7. Its function is as follows. Catalyzes the transfer of the enolpyruvyl moiety of phosphoenolpyruvate (PEP) to the 5-hydroxyl of shikimate-3-phosphate (S3P) to produce enolpyruvyl shikimate-3-phosphate and inorganic phosphate. The polypeptide is 3-phosphoshikimate 1-carboxyvinyltransferase (Bordetella parapertussis (strain 12822 / ATCC BAA-587 / NCTC 13253)).